A 117-amino-acid polypeptide reads, in one-letter code: MKGQKYYSDYHVWIEPIHSRIVKLGLSSQMREHLGNILHIDLPSVGSFIKEGEELCILESSKSAIEVLSPVSGEVLEVNTALEDDILPVNNATESEGWFVVLQLTEDFRSESFSLEP.

Residues 21-103 enclose the Lipoyl-binding domain; that stretch reads IVKLGLSSQM…ESEGWFVVLQ (83 aa). Lysine 62 is modified (N6-lipoyllysine).

Belongs to the GcvH family. It depends on (R)-lipoate as a cofactor.

This Chlamydia trachomatis serovar L2 (strain ATCC VR-902B / DSM 19102 / 434/Bu) protein is Glycine cleavage system H-like protein.